The following is a 180-amino-acid chain: Ribosome maturation factor RimM (180 aa).

The 74-residue stretch at 103–176 (GDIWWDRDLV…RIVVDPPPGL (74 aa)) folds into the PRC barrel domain.

This sequence belongs to the RimM family. Binds ribosomal protein uS19.

The protein resides in the cytoplasm. An accessory protein needed during the final step in the assembly of 30S ribosomal subunit, possibly for assembly of the head region. Essential for efficient processing of 16S rRNA. May be needed both before and after RbfA during the maturation of 16S rRNA. It has affinity for free ribosomal 30S subunits but not for 70S ribosomes. This Frankia alni (strain DSM 45986 / CECT 9034 / ACN14a) protein is Ribosome maturation factor RimM.